Reading from the N-terminus, the 134-residue chain is MVTLFLSPSCTSCRKARAWLVKHEVDFQEHNIITSPLSRDELMSILSFTENGTEDIISTRSKVFQKLDVDVEELSISDLIDLIAKNPSLLRRPIIMDQKRMQIGFNEDEIRAFLSRDYRKQELRQATIKAEIEG.

A disulfide bridge links Cys10 with Cys13.

It belongs to the ArsC family. Spx subfamily. Interacts with the C-terminal domain of the alpha subunit of the RNAP.

It localises to the cytoplasm. In terms of biological role, global transcriptional regulator that plays a key role in stress response and exerts either positive or negative regulation of genes. Acts by interacting with the C-terminal domain of the alpha subunit of the RNA polymerase (RNAP). This interaction can enhance binding of RNAP to the promoter region of target genes and stimulate their transcription, or block interaction of RNAP with activator. This chain is Global transcriptional regulator Spx, found in Streptococcus pyogenes serotype M3 (strain ATCC BAA-595 / MGAS315).